The chain runs to 438 residues: Thymidine phosphorylase (438 aa).

It belongs to the thymidine/pyrimidine-nucleoside phosphorylase family. In terms of assembly, homodimer.

The enzyme catalyses thymidine + phosphate = 2-deoxy-alpha-D-ribose 1-phosphate + thymine. Its pathway is pyrimidine metabolism; dTMP biosynthesis via salvage pathway; dTMP from thymine: step 1/2. Its function is as follows. The enzymes which catalyze the reversible phosphorolysis of pyrimidine nucleosides are involved in the degradation of these compounds and in their utilization as carbon and energy sources, or in the rescue of pyrimidine bases for nucleotide synthesis. The chain is Thymidine phosphorylase from Burkholderia cenocepacia (strain ATCC BAA-245 / DSM 16553 / LMG 16656 / NCTC 13227 / J2315 / CF5610) (Burkholderia cepacia (strain J2315)).